Consider the following 324-residue polypeptide: Beta-ketoacyl-[acyl-carrier-protein] synthase III (324 aa).

Active-site residues include cysteine 112 and histidine 249. Positions 250–254 (QANDR) are ACP-binding. The active site involves asparagine 279.

It belongs to the thiolase-like superfamily. FabH family. In terms of assembly, homodimer.

Its subcellular location is the cytoplasm. It catalyses the reaction malonyl-[ACP] + acetyl-CoA + H(+) = 3-oxobutanoyl-[ACP] + CO2 + CoA. It participates in lipid metabolism; fatty acid biosynthesis. Catalyzes the condensation reaction of fatty acid synthesis by the addition to an acyl acceptor of two carbons from malonyl-ACP. Catalyzes the first condensation reaction which initiates fatty acid synthesis and may therefore play a role in governing the total rate of fatty acid production. Possesses both acetoacetyl-ACP synthase and acetyl transacylase activities. Its substrate specificity determines the biosynthesis of branched-chain and/or straight-chain of fatty acids. In Streptococcus gordonii (strain Challis / ATCC 35105 / BCRC 15272 / CH1 / DL1 / V288), this protein is Beta-ketoacyl-[acyl-carrier-protein] synthase III.